We begin with the raw amino-acid sequence, 278 residues long: Indole-3-glycerol phosphate synthase (278 aa).

This sequence belongs to the TrpC family.

It catalyses the reaction 1-(2-carboxyphenylamino)-1-deoxy-D-ribulose 5-phosphate + H(+) = (1S,2R)-1-C-(indol-3-yl)glycerol 3-phosphate + CO2 + H2O. Its pathway is amino-acid biosynthesis; L-tryptophan biosynthesis; L-tryptophan from chorismate: step 4/5. The chain is Indole-3-glycerol phosphate synthase from Stutzerimonas stutzeri (strain A1501) (Pseudomonas stutzeri).